Here is a 1039-residue protein sequence, read N- to C-terminus: Serine/threonine-protein kinase Tao (1039 aa).

Positions 27–280 constitute a Protein kinase domain; the sequence is FEDLREIGHG…SAKLLTHAYV (254 aa). Residues 33-41 and Lys-56 each bind ATP; that span reads IGHGSFGAV. Asp-150 acts as the Proton acceptor in catalysis. 4 disordered regions span residues 324 to 457, 485 to 508, 629 to 648, and 677 to 707; these read SAVG…NSAS, GGGGTGTGGSGGGSPASGGPLADR, HQQDVERRAKQTSAAEKKLH, and WKRELSMDESTPKRQRDLTLQSQKDNLKQHE. Over residues 341 to 350 the composition is skewed to polar residues; it reads SSKSNSITSE. Residues 359–376 show a composition bias toward low complexity; sequence SAASSQSSSSNSIPAAAQ. Positions 377 to 387 are enriched in basic residues; that stretch reads NHHHIAAHHHQ. 2 stretches are compositionally biased toward low complexity: residues 388-397 and 413-429; these read QAASAAVAAA and PSGQQGQPVPPGAVSRN. Residues 444-454 show a composition bias toward polar residues; that stretch reads HSMNNNVTPTN. The segment covering 485–500 has biased composition (gly residues); that stretch reads GGGGTGTGGSGGGSPA. 2 coiled-coil regions span residues 631–765 and 835–993; these read QDVE…MLLK and KQFR…DNES. Basic and acidic residues predominate over residues 677 to 693; that stretch reads WKRELSMDESTPKRQRD.

Belongs to the protein kinase superfamily. STE Ser/Thr protein kinase family. STE20 subfamily. In terms of assembly, interacts with Schip1; the interaction enhances Tao kinase activity. Mg(2+) is required as a cofactor. Post-translationally, autophosphorylated. In terms of tissue distribution, in the posterior midgut, expressed in almost all intestinal cell types including intestinal stem cells and enterocytes (at protein level). Maternally expressed, ubiquitously distributed in the egg and early embryo and enriched in the germ plasm at the posterior pole of the early embryo including the pole cells.

It localises to the cytoplasm. The protein resides in the cytoskeleton. It is found in the spindle. Its subcellular location is the membrane. The protein localises to the perikaryon. It localises to the cell cortex. The protein resides in the cell projection. It is found in the axon. It carries out the reaction L-seryl-[protein] + ATP = O-phospho-L-seryl-[protein] + ADP + H(+). It catalyses the reaction L-threonyl-[protein] + ATP = O-phospho-L-threonyl-[protein] + ADP + H(+). Functionally, serine/threonine-protein kinase which regulates the Hippo/SWH (Sav/Wts/Hpo) signaling pathway, a signaling pathway that plays a pivotal role in organ size control and tumor suppression by restricting proliferation and promoting apoptosis. The core of this pathway is composed of a kinase cascade wherein Hippo (hpo), in complex with its regulatory protein Salvador (sav), phosphorylates and activates Warts (wts) in complex with its regulatory protein Mats, which in turn phosphorylates and inactivates the Yorkie (yki) oncoprotein. In imaginal cells, phosphorylates and activates hpo and leads to repression of yki. In the midgut, negatively regulates the proliferation of intestinal stem cells through the Hippo/SWH pathway. Independent of the hippo/SWH pathway, regulates epithelial morphogenesis in follicle cells by promoting the endocytosis of Fas2 and reducing lateral adhesion between epithelial cells which, in turn, permits shrinking of the lateral membrane and initiates morphogenesis of the squamous epithelium. Required for the development of both the mushroom body and the ellipsoid body in the brain and may act as a negative regulator of the par-1 kinase. Negatively regulates the JNK pathway which increases sensitivity to ethanol exposure. Plays a role in the control of cell shape by negatively regulating the growth of microtubule plus-ends as they contact the actin-rich cell cortex. Required for the induction of apoptosis in pole cells by promoting expression of skl which enhances activity of the apoptosis activator hid. Induces in vitro expression of large, highly dynamic, microtubule-dependent lamellopodia-like cytoplasmic expansions which constantly probe the environment. Its function is as follows. Induces in vitro expression of actin-dependent filopodia-like cytoplasmic protrusions which firmly attach to the substrate. Antagonizes the activity of isoform D. The chain is Serine/threonine-protein kinase Tao from Drosophila melanogaster (Fruit fly).